The chain runs to 215 residues: Pyrrolidone-carboxylate peptidase 1 (215 aa).

Active-site residues include Glu-80, Cys-143, and His-167.

The protein belongs to the peptidase C15 family. As to quaternary structure, homotetramer.

It localises to the cytoplasm. It carries out the reaction Release of an N-terminal pyroglutamyl group from a polypeptide, the second amino acid generally not being Pro.. Removes 5-oxoproline from various penultimate amino acid residues except L-proline. The protein is Pyrrolidone-carboxylate peptidase 1 of Ralstonia nicotianae (strain ATCC BAA-1114 / GMI1000) (Ralstonia solanacearum).